The following is a 230-amino-acid chain: Large ribosomal subunit protein uL1 (230 aa).

The protein belongs to the universal ribosomal protein uL1 family. In terms of assembly, part of the 50S ribosomal subunit.

Its function is as follows. Binds directly to 23S rRNA. The L1 stalk is quite mobile in the ribosome, and is involved in E site tRNA release. Protein L1 is also a translational repressor protein, it controls the translation of the L11 operon by binding to its mRNA. This chain is Large ribosomal subunit protein uL1, found in Granulibacter bethesdensis (strain ATCC BAA-1260 / CGDNIH1).